A 504-amino-acid chain; its full sequence is ATP synthase subunit alpha (504 aa).

Position 170–177 (G170–T177) interacts with ATP.

This sequence belongs to the ATPase alpha/beta chains family. F-type ATPases have 2 components, CF(1) - the catalytic core - and CF(0) - the membrane proton channel. CF(1) has five subunits: alpha(3), beta(3), gamma(1), delta(1), epsilon(1). CF(0) has four main subunits: a, b, b' and c.

It localises to the cellular thylakoid membrane. The catalysed reaction is ATP + H2O + 4 H(+)(in) = ADP + phosphate + 5 H(+)(out). Its function is as follows. Produces ATP from ADP in the presence of a proton gradient across the membrane. The alpha chain is a regulatory subunit. The chain is ATP synthase subunit alpha from Prochlorococcus marinus (strain MIT 9211).